An 887-amino-acid chain; its full sequence is Translation initiation factor IF-2 (887 aa).

A disordered region spans residues Met-1–Ala-259. Residues Gly-62 to Glu-94 show a composition bias toward low complexity. 2 stretches are compositionally biased toward basic and acidic residues: residues Gln-95 to Lys-111 and Glu-119 to Ala-158. The span at Glu-159–Thr-210 shows a compositional bias: low complexity. The span at Lys-250–Ala-259 shows a compositional bias: basic and acidic residues. Residues Val-386–Lys-556 enclose the tr-type G domain. A G1 region spans residues Gly-395–Thr-402. Gly-395–Thr-402 serves as a coordination point for GTP. The interval Gly-420–His-424 is G2. Residues Asp-442–Gly-445 are G3. GTP-binding positions include Asp-442 to His-446 and Asn-496 to Asp-499. The interval Asn-496–Asp-499 is G4. Positions Ser-532–Leu-534 are G5.

It belongs to the TRAFAC class translation factor GTPase superfamily. Classic translation factor GTPase family. IF-2 subfamily.

It is found in the cytoplasm. Functionally, one of the essential components for the initiation of protein synthesis. Protects formylmethionyl-tRNA from spontaneous hydrolysis and promotes its binding to the 30S ribosomal subunits. Also involved in the hydrolysis of GTP during the formation of the 70S ribosomal complex. The polypeptide is Translation initiation factor IF-2 (Acidiphilium cryptum (strain JF-5)).